A 420-amino-acid polypeptide reads, in one-letter code: Probable pectate lyase C (420 aa).

Residues 1–20 (MKLSAPLLVSLAAFSQAVTA) form the signal peptide. N-linked (GlcNAc...) asparagine glycosylation is found at asparagine 49, asparagine 165, and asparagine 202. Arginine 205 is a catalytic residue. In terms of domain architecture, EF-hand spans 262-297 (NANFHGYVQNNYYDPDKDGQLDGFELGVSSSNYGGV). Positions 275, 277, 279, 281, and 286 each coordinate Ca(2+). The interval 358–396 (TMGGPGTLNGGTPAKDTDGDGIPDEAEKQLGTDPNTNDS) is disordered. Asparagine 394 is a glycosylation site (N-linked (GlcNAc...) asparagine).

Belongs to the polysaccharide lyase 1 family. It depends on Ca(2+) as a cofactor.

It is found in the secreted. It carries out the reaction Eliminative cleavage of (1-&gt;4)-alpha-D-galacturonan to give oligosaccharides with 4-deoxy-alpha-D-galact-4-enuronosyl groups at their non-reducing ends.. Its function is as follows. Pectinolytic enzyme consist of four classes of enzymes: pectin lyase, polygalacturonase, pectin methylesterase and rhamnogalacturonase. Among pectinolytic enzymes, pectin lyase is the most important in depolymerization of pectin, since it cleaves internal glycosidic bonds of highly methylated pectins. Favors pectate, the anion, over pectin, the methyl ester. The sequence is that of Probable pectate lyase C (plyC) from Aspergillus fumigatus (strain CBS 144.89 / FGSC A1163 / CEA10) (Neosartorya fumigata).